The primary structure comprises 467 residues: 3-isopropylmalate dehydratase large subunit (467 aa).

Residues Cys-347, Cys-407, and Cys-410 each contribute to the [4Fe-4S] cluster site.

Belongs to the aconitase/IPM isomerase family. LeuC type 1 subfamily. In terms of assembly, heterodimer of LeuC and LeuD. It depends on [4Fe-4S] cluster as a cofactor.

It carries out the reaction (2R,3S)-3-isopropylmalate = (2S)-2-isopropylmalate. Its pathway is amino-acid biosynthesis; L-leucine biosynthesis; L-leucine from 3-methyl-2-oxobutanoate: step 2/4. Its function is as follows. Catalyzes the isomerization between 2-isopropylmalate and 3-isopropylmalate, via the formation of 2-isopropylmaleate. This chain is 3-isopropylmalate dehydratase large subunit, found in Nostoc sp. (strain PCC 7120 / SAG 25.82 / UTEX 2576).